We begin with the raw amino-acid sequence, 384 residues long: Na(+)/H(+) antiporter NhaA (384 aa).

A run of 11 helical transmembrane segments spans residues 7–27, 58–78, 94–114, 124–144, 153–173, 179–199, 204–224, 256–276, 285–305, 325–345, and 357–377; these read FYNLETIGGILLFIAAVLAII, LLLWINDGLMAIYFLLIGLEI, LVPALTALAGLLFPALIFIFF, GWAIPTATDIAFTLGIVSLLG, ILLTAIAIFDDIAAIVIIALF, SLLSLSLALVFTLILIGLNYF, ISVFMLFGVALWIAVLKSGVH, VVFLILPLFAFANAGVSFVGL, VVLGIGLGLFLGKQLGIFLSL, VYGIALICGVGFTMSLFIGSL, and MVKIGVVFGSFIAGLTGFLVL.

Belongs to the NhaA Na(+)/H(+) (TC 2.A.33) antiporter family.

It is found in the cell inner membrane. The catalysed reaction is Na(+)(in) + 2 H(+)(out) = Na(+)(out) + 2 H(+)(in). Functionally, na(+)/H(+) antiporter that extrudes sodium in exchange for external protons. This Legionella pneumophila (strain Corby) protein is Na(+)/H(+) antiporter NhaA.